The chain runs to 306 residues: D-alanine--D-alanine ligase (306 aa).

The ATP-grasp domain maps to Arg-101 to Glu-300. Met-128–Thr-182 contacts ATP. Residues Asp-250, Glu-267, and Asn-269 each coordinate Mg(2+).

The protein belongs to the D-alanine--D-alanine ligase family. Mg(2+) is required as a cofactor. Requires Mn(2+) as cofactor.

Its subcellular location is the cytoplasm. The enzyme catalyses 2 D-alanine + ATP = D-alanyl-D-alanine + ADP + phosphate + H(+). It functions in the pathway cell wall biogenesis; peptidoglycan biosynthesis. Functionally, cell wall formation. The chain is D-alanine--D-alanine ligase from Xanthobacter autotrophicus (strain ATCC BAA-1158 / Py2).